The primary structure comprises 164 residues: Diphosphoinositol polyphosphate phosphohydrolase 3-beta (164 aa).

Residues Arg9, 17 to 19 (KKR), and 38 to 40 (SSR) contribute to the substrate site. The 128-residue stretch at 17-144 (KKRAACLCFR…VHAEYLQKLK (128 aa)) folds into the Nudix hydrolase domain. Residues Gly49 and Glu65 each coordinate Mg(2+). The Nudix box motif lies at 50–71 (GGMEPEEEPGGAAVREVFEEAG). Glu68 functions as the Proton acceptor in the catalytic mechanism. Glu69 provides a ligand contact to Mg(2+). Substrate is bound by residues 89–91 (RKH), Arg115, and Lys133. A disordered region spans residues 144–164 (KLGGSPTNGNSVAPSPPEGDP).

This sequence belongs to the Nudix hydrolase family. DIPP subfamily. Requires Mg(2+) as cofactor. Mn(2+) serves as cofactor.

It localises to the cytoplasm. The catalysed reaction is diphospho-myo-inositol polyphosphate + H2O = myo-inositol polyphosphate + phosphate.. The enzyme catalyses P(1),P(6)-bis(5'-adenosyl) hexaphosphate + H2O = adenosine 5'-pentaphosphate + AMP + 2 H(+). It catalyses the reaction P(1),P(5)-bis(5'-adenosyl) pentaphosphate + H2O = adenosine 5'-tetraphosphate + AMP + 2 H(+). Functionally, cleaves a beta-phosphate from the diphosphate groups in PP-InsP5 (diphosphoinositol pentakisphosphate), suggesting that it may play a role in signal transduction. Also able to catalyze the hydrolysis of dinucleoside oligophosphates, with Ap6A and Ap5A being the preferred substrates. The major reaction products are ADP and p4a from Ap6A and ADP and ATP from Ap5A. Also able to hydrolyze 5-phosphoribose 1-diphosphate. This is Diphosphoinositol polyphosphate phosphohydrolase 3-beta from Bos taurus (Bovine).